Reading from the N-terminus, the 147-residue chain is UPF0306 protein YhbP (147 aa).

This sequence belongs to the UPF0306 family.

The polypeptide is UPF0306 protein YhbP (Salmonella schwarzengrund (strain CVM19633)).